Reading from the N-terminus, the 193-residue chain is Probable nicotinate-nucleotide adenylyltransferase (193 aa).

It belongs to the NadD family.

It carries out the reaction nicotinate beta-D-ribonucleotide + ATP + H(+) = deamido-NAD(+) + diphosphate. It functions in the pathway cofactor biosynthesis; NAD(+) biosynthesis; deamido-NAD(+) from nicotinate D-ribonucleotide: step 1/1. Its function is as follows. Catalyzes the reversible adenylation of nicotinate mononucleotide (NaMN) to nicotinic acid adenine dinucleotide (NaAD). The protein is Probable nicotinate-nucleotide adenylyltransferase of Endomicrobium trichonymphae.